The primary structure comprises 293 residues: Ribonuclease HIII (293 aa).

One can recognise an RNase H type-2 domain in the interval 78–293; sequence LPLIGTDEVG…TEKAKKRLER (216 aa). 3 residues coordinate a divalent metal cation: D84, E85, and D187.

The protein belongs to the RNase HII family. RnhC subfamily. The cofactor is Mn(2+). Mg(2+) serves as cofactor.

It is found in the cytoplasm. It carries out the reaction Endonucleolytic cleavage to 5'-phosphomonoester.. Endonuclease that specifically degrades the RNA of RNA-DNA hybrids. The sequence is that of Ribonuclease HIII (rnhC) from Streptococcus pneumoniae serotype 4 (strain ATCC BAA-334 / TIGR4).